A 123-amino-acid chain; its full sequence is Dihydroneopterin triphosphate 2'-epimerase (123 aa).

This sequence belongs to the DHNA family. As to quaternary structure, homooctamer. Dimer of tetramers.

The enzyme catalyses 7,8-dihydroneopterin 3'-triphosphate = 7,8-dihydromonapterin 3'-triphosphate. In terms of biological role, catalyzes the epimerization of carbon 2' of the side chain of 7,8-dihydroneopterin triphosphate (H2NTP) to form 7,8-dihydromonapterin triphosphate (H2MTP). Is required for tetrahydromonapterin biosynthesis. This is Dihydroneopterin triphosphate 2'-epimerase from Pseudomonas aeruginosa (strain ATCC 15692 / DSM 22644 / CIP 104116 / JCM 14847 / LMG 12228 / 1C / PRS 101 / PAO1).